The chain runs to 144 residues: MIKLEYLQDPSPRKRRTKLLGRGPSSGHGKTSGRGHKGDGSRSGYKRRFGYEGGGVPLYRRVPTRGFSHKRFDKCVEEITTQRLNGIFENGEEVSLETLKQRKVIHRETSRVKVILKGALDKKLVWKDAAIVLSEGVKSLIETV.

The disordered stretch occupies residues 1–48 (MIKLEYLQDPSPRKRRTKLLGRGPSSGHGKTSGRGHKGDGSRSGYKRR).

The protein belongs to the universal ribosomal protein uL15 family. As to quaternary structure, part of the 50S ribosomal subunit.

In terms of biological role, binds to the 23S rRNA. The chain is Large ribosomal subunit protein uL15 from Chlamydia muridarum (strain MoPn / Nigg).